Here is a 171-residue protein sequence, read N- to C-terminus: Large ribosomal subunit protein uL24 (171 aa).

Residues 1 to 124 are large ribosomal subunit protein uL24; it reads MNIKTGDTVV…AKPAKTKAEK (124 aa). The segment at 108–171 is disordered; sequence GQTLDKAAKP…SVQKKGASGK (64 aa). The tract at residues 125-171 is unknown; sequence VEKAATSSTDKPAKVTKAAKEAKPVKAVKSQKVEKNTSVQKKGASGK.

This sequence belongs to the universal ribosomal protein uL24 family. In terms of assembly, part of the 50S ribosomal subunit.

Its function is as follows. One of two assembly initiator proteins, it binds directly to the 5'-end of the 23S rRNA, where it nucleates assembly of the 50S subunit. In terms of biological role, one of the proteins that surrounds the polypeptide exit tunnel on the outside of the subunit. This chain is Large ribosomal subunit protein uL24, found in Acholeplasma laidlawii (strain PG-8A).